The primary structure comprises 185 residues: Lipid A acyltransferase PagP (185 aa).

Residues 1-14 form the signal peptide; it reads MKLKPVLYLLMLLG. The N-palmitoyl cysteine moiety is linked to residue C15. A lipid anchor (S-diacylglycerol cysteine) is attached at C15. Residues H57, D100, and S101 contribute to the active site.

The protein belongs to the lipid A palmitoyltransferase family. As to quaternary structure, homodimer.

It is found in the cell outer membrane. It catalyses the reaction a lipid A + a 1,2-diacyl-sn-glycero-3-phosphocholine = a hepta-acyl lipid A + a 2-acyl-sn-glycero-3-phosphocholine. The enzyme catalyses a lipid IVA + a 1,2-diacyl-sn-glycero-3-phosphocholine = a lipid IVB + a 2-acyl-sn-glycero-3-phosphocholine. The catalysed reaction is a lipid IIA + a 1,2-diacyl-sn-glycero-3-phosphocholine = a lipid IIB + a 2-acyl-sn-glycero-3-phosphocholine. In terms of biological role, transfers a fatty acid residue from the sn-1 position of a phospholipid to the N-linked hydroxyfatty acid chain on the proximal unit of lipid A or its precursors. In Erwinia pyrifoliae (strain DSM 12163 / CIP 106111 / Ep16/96), this protein is Lipid A acyltransferase PagP.